A 313-amino-acid polypeptide reads, in one-letter code: uncharacterized protein (313 aa).

Helical transmembrane passes span 42 to 64 (LVVL…LFLT) and 74 to 96 (VRAY…TLYV).

The protein localises to the cell membrane. This is an uncharacterized protein from Treponema pallidum (strain Nichols).